The chain runs to 340 residues: Probable protein phosphatase 2C 21 (340 aa).

Positions 1–21 (MGASPSRPLEQSPSSSEGENH) are disordered. Residues 24-305 (KYASYTTQGF…DNATAILVKF (282 aa)) form the PPM-type phosphatase domain. 4 residues coordinate Mn(2+): aspartate 58, glycine 59, aspartate 254, and aspartate 296. The segment at 311 to 340 (DPDEVASARDEHQHNPEGGDEKLDINNDND) is disordered. Residues 316 to 340 (ASARDEHQHNPEGGDEKLDINNDND) show a composition bias toward basic and acidic residues.

The protein belongs to the PP2C family. The cofactor is Mg(2+). Mn(2+) is required as a cofactor.

The catalysed reaction is O-phospho-L-seryl-[protein] + H2O = L-seryl-[protein] + phosphate. It catalyses the reaction O-phospho-L-threonyl-[protein] + H2O = L-threonyl-[protein] + phosphate. The protein is Probable protein phosphatase 2C 21 of Oryza sativa subsp. japonica (Rice).